A 326-amino-acid chain; its full sequence is tRNA-modifying protein YgfZ (326 aa).

2 residues coordinate folate: Trp27 and Trp189.

Belongs to the tRNA-modifying YgfZ family.

It localises to the cytoplasm. Folate-binding protein involved in regulating the level of ATP-DnaA and in the modification of some tRNAs. It is probably a key factor in regulatory networks that act via tRNA modification, such as initiation of chromosomal replication. The sequence is that of tRNA-modifying protein YgfZ from Salmonella paratyphi A (strain AKU_12601).